The primary structure comprises 546 residues: Acyl-CoA ligase oryP (546 aa).

ATP contacts are provided by residues T166–K174, Q300–L305, and R403. CoA contacts are provided by residues W412 to H414 and L482 to R484. Residue K499 participates in ATP binding.

It belongs to the ATP-dependent AMP-binding enzyme family.

It participates in secondary metabolite biosynthesis. In terms of biological role, acyl-CoA ligase; part of the gene cluster that mediates the biosynthesis of oryzines, natural products with an unusual maleidride backbone. The two subunits of the fungal fatty acid synthase oryfasA and oryfasB probably form octenoic acid. This fatty acid is most likely activated by the acyl-CoA ligase oryP to give octenyl-CoA before the citrate synthase-like protein oryE catalyzes condensation with oxaloacetate to form tricarboxylic acid. The next steps of the pathways are conjectural, but a favorite possible route has been proposed, beginning with decarboxylation and concomitant dehydration by the decarboxylase oryM, followed by tautomerization, which may lead to the production of a diene intermediate. Reduction of this diene intermediate could give the known metabolite piliformic acid. On the pathway to oryzine B and oryzine A, however, hydroxylation of the diene by the alpha-ketoglutarate-dependent dioxygenase oryG and lactonisation by the lactonohydrolases oryH or oryL could give oryzine B directly. Finally, enoyl reduction by the dehydrogenase oryD would then convert oryzine B into oryzine A. This Aspergillus oryzae (strain ATCC 42149 / RIB 40) (Yellow koji mold) protein is Acyl-CoA ligase oryP.